Reading from the N-terminus, the 1334-residue chain is Lysine-specific demethylase 3A-B (1334 aa).

3 disordered regions span residues 243–288, 352–382, and 514–533; these read DQND…KTSF, PGIQ…SQNL, and KPQE…VTYP. Residues 267–283 show a composition bias toward basic and acidic residues; the sequence is TEVKQTRNEEVPSKDVT. The C6-type zinc finger occupies 684-709; that stretch reads CDACDTTIFNLHWVCPKCGFGVCVDC. The short motif at 897-901 is the LXXLL motif element; it reads LRNLL. In terms of domain architecture, JmjC spans 1089-1294; sequence RREGKLNLAA…HCFCLTQEFR (206 aa). 3 residues coordinate Fe cation: His1133, Asp1135, and His1262.

The protein belongs to the JHDM2 histone demethylase family. The cofactor is Fe(2+).

Its subcellular location is the cytoplasm. It localises to the nucleus. It catalyses the reaction N(6),N(6)-dimethyl-L-lysyl(9)-[histone H3] + 2 2-oxoglutarate + 2 O2 = L-lysyl(9)-[histone H3] + 2 formaldehyde + 2 succinate + 2 CO2. Functionally, histone demethylase that specifically demethylates 'Lys-9' of histone H3, thereby playing a central role in histone code. Preferentially demethylates mono- and dimethylated H3 'Lys-9' residue, with a preference for dimethylated residue, while it has weak or no activity on trimethylated H3 'Lys-9'. Demethylation of Lys residue generates formaldehyde and succinate. The sequence is that of Lysine-specific demethylase 3A-B (kdm3a-b) from Xenopus laevis (African clawed frog).